A 270-amino-acid polypeptide reads, in one-letter code: DNA repair protein RecO (270 aa).

The tract at residues 202–221 is disordered; that stretch reads PELPPSTIDADTDNPSQPPS.

It belongs to the RecO family.

In terms of biological role, involved in DNA repair and RecF pathway recombination. The chain is DNA repair protein RecO from Rhodopirellula baltica (strain DSM 10527 / NCIMB 13988 / SH1).